The sequence spans 516 residues: D-aminopeptidase (516 aa).

The Nucleophile role is filled by Ser61. The active-site Proton donor/acceptor is the Lys64. Residues 476–486 (RRSMDAPAPGD) are important for specificity. Asp480 is a substrate binding site.

Belongs to the peptidase S12 family. As to quaternary structure, homodimer.

It catalyses the reaction Release of an N-terminal D-amino acid from a peptide, Xaa-|-Yaa-, in which Xaa is preferably D-Ala, D-Ser or D-Thr. D-amino acid amides and methyl esters also are hydrolyzed, as is glycine amide.. With respect to regulation, inhibited by beta-lactam compounds such as 6-aminopenicillic acid, 7-aminocephalosporanic acid, benzylpenicillin and ampicillin. Inhibited by p-chloromercuribenzoate. Hydrolyzes N-terminal residues in D-amino acid-containing peptides. The protein is D-aminopeptidase of Cereibacter sphaeroides (strain ATCC 17023 / DSM 158 / JCM 6121 / CCUG 31486 / LMG 2827 / NBRC 12203 / NCIMB 8253 / ATH 2.4.1.) (Rhodobacter sphaeroides).